Consider the following 393-residue polypeptide: Elongation factor Tu (393 aa).

Residues 10-203 (KPHVNIGTIG…AVDEFIPEPL (194 aa)) form the tr-type G domain. Residues 19 to 26 (GHVDHGKT) are G1. 19-26 (GHVDHGKT) provides a ligand contact to GTP. Thr26 is a Mg(2+) binding site. Residues 60–64 (GITIS) are G2. A G3 region spans residues 81–84 (DCPG). GTP contacts are provided by residues 81–85 (DCPGH) and 136–139 (NKVD). A G4 region spans residues 136-139 (NKVD). The G5 stretch occupies residues 173 to 175 (SAL).

This sequence belongs to the TRAFAC class translation factor GTPase superfamily. Classic translation factor GTPase family. EF-Tu/EF-1A subfamily. As to quaternary structure, monomer.

It is found in the cytoplasm. The catalysed reaction is GTP + H2O = GDP + phosphate + H(+). Functionally, GTP hydrolase that promotes the GTP-dependent binding of aminoacyl-tRNA to the A-site of ribosomes during protein biosynthesis. In Chlorobium phaeobacteroides (strain DSM 266 / SMG 266 / 2430), this protein is Elongation factor Tu.